We begin with the raw amino-acid sequence, 87 residues long: U3-theraphotoxin-Hhn1a 8 (87 aa).

The first 24 residues, methionine 1–alanine 24, serve as a signal peptide directing secretion. Residues serine 25–arginine 52 constitute a propeptide that is removed on maturation. Disulfide bonds link cysteine 54–cysteine 67, cysteine 61–cysteine 72, and cysteine 66–cysteine 79.

It belongs to the neurotoxin 10 (Hwtx-1) family. 51 (Hntx-8) subfamily. Hntx-8 sub-subfamily. Expressed by the venom gland.

The protein resides in the secreted. In terms of biological role, ion channel inhibitor. In Cyriopagopus hainanus (Chinese bird spider), this protein is U3-theraphotoxin-Hhn1a 8.